A 410-amino-acid chain; its full sequence is Threonylcarbamoyladenosine tRNA methylthiotransferase MtaB (410 aa).

An MTTase N-terminal domain is found at 1–113; the sequence is MKVAFETLGC…LLKILEEYLE (113 aa). Cysteine 10, cysteine 46, cysteine 77, cysteine 152, cysteine 156, and cysteine 159 together coordinate [4Fe-4S] cluster. One can recognise a Radical SAM core domain in the interval 138 to 366; sequence YFEGVRPFLK…KELDQKKRQE (229 aa).

It belongs to the methylthiotransferase family. MtaB subfamily. Requires [4Fe-4S] cluster as cofactor.

It localises to the cytoplasm. The catalysed reaction is N(6)-L-threonylcarbamoyladenosine(37) in tRNA + (sulfur carrier)-SH + AH2 + 2 S-adenosyl-L-methionine = 2-methylsulfanyl-N(6)-L-threonylcarbamoyladenosine(37) in tRNA + (sulfur carrier)-H + 5'-deoxyadenosine + L-methionine + A + S-adenosyl-L-homocysteine + 2 H(+). Catalyzes the methylthiolation of N6-threonylcarbamoyladenosine (t(6)A), leading to the formation of 2-methylthio-N6-threonylcarbamoyladenosine (ms(2)t(6)A) at position 37 in tRNAs that read codons beginning with adenine. The protein is Threonylcarbamoyladenosine tRNA methylthiotransferase MtaB (mtaB) of Aquifex aeolicus (strain VF5).